The chain runs to 85 residues: Neurotoxin beta-KTx 14.3 (85 aa).

The signal sequence occupies residues 1-20; the sequence is MKQYIFFLALIVLTATFAEA. A propeptide spanning residues 21–37 is cleaved from the precursor; the sequence is GKKTEILDKVKKVFSKG. The BetaSPN-type CS-alpha/beta domain occupies 49–85; sequence ELGCPFIEKWCEDHCESKKQVGKCENFDCSCVKLGGK. 3 cysteine pairs are disulfide-bonded: Cys-52-Cys-72, Cys-59-Cys-77, and Cys-63-Cys-79.

Belongs to the long chain scorpion toxin family. Class 2 subfamily. Expressed by the venom gland.

It is found in the secreted. In terms of biological role, toxin with activity on voltage-gated potassium channels. Moderately and reversibly blocks up to 50% of the activity of Kv7.1/KCNQ1 (tested at 22 uM). 3D-structure modeling of the KCNQ1-toxin complex shows that the toxin interacts with the channel pore domain. Additionally, shows a very weak effect to block voltage-gated potassium channel Kv1.1/KCNA1. Functionally, has a very weak effect to block voltage-gated potassium channel Kv1.1/KCNA1. The chain is Neurotoxin beta-KTx 14.3 from Lychas mucronatus (Chinese swimming scorpion).